The primary structure comprises 1891 residues: Endoribonuclease Dicer-L (1891 aa).

The Helicase ATP-binding domain occupies 41-217 (LLEAALDHNT…DLEEKIQKLE (177 aa)). 54–61 (LNSGSGKT) contributes to the ATP binding site. Residues 165-168 (DECH) carry the DECH box motif. The region spanning 425–594 (SFPSPFTNIL…SIDCGNTESE (170 aa)) is the Helicase C-terminal domain. Positions 622–714 (AIGHINRYCA…MPVGKETVKY (93 aa)) constitute a Dicer dsRNA-binding fold domain. In terms of domain architecture, PAZ spans 887 to 1034 (KFVEDIEKSE…LVPELCAIHP (148 aa)). RNase III domains lie at 1248 to 1379 (TSDM…ETSG) and 1635 to 1793 (FENF…MDSG). Mg(2+) contacts are provided by Glu1292, Asp1370, Glu1373, Glu1674, Asp1779, and Glu1782. The DRBM domain occupies 1818–1883 (VPRSPVRELL…ARRALRSLKA (66 aa)).

It belongs to the helicase family. Dicer subfamily. As to quaternary structure, component of the RISC loading complex (RLC), or micro-RNA (miRNA) loading complex (miRLC), which is composed of dicer1, ago2 and tarbp2; dicer1 and tarbp2 are required to process precursor miRNAs (pre-miRNAs) to mature miRNAs and then load them onto ago2. Note that the trimeric RLC/miRLC is also referred to as RISC. It depends on Mg(2+) as a cofactor. Mn(2+) is required as a cofactor.

The protein resides in the cytoplasm. The enzyme catalyses Endonucleolytic cleavage to 5'-phosphomonoester.. Double-stranded RNA (dsRNA) endoribonuclease playing a central role in short dsRNA-mediated post-transcriptional gene silencing. Cleaves naturally occurring long dsRNAs and short hairpin pre-microRNAs (miRNA) into fragments of 21 to 23 nucleotides with 3' overhang of two nucleotides, producing respectively short interfering RNAs (siRNA) and mature microRNAs. SiRNAs and miRNAs serve as guide to direct the RNA-induced silencing complex (RISC) to complementary RNAs to degrade them or prevent their translation. Gene silencing mediated by siRNAs, also called RNA interference, controls the elimination of transcripts from mobile and repetitive DNA elements of the genome but also the degradation of exogenous RNA of viral origin for instance. The miRNA pathway on the other side is a mean to specifically regulate the expression of target genes. During embryonic development, at the left-right organizer, post-transcriptionally regulates the expression of dand5 in flow sensor cells. In post-flow stages, acts along with Bicc1 to repress dand5 mRNA translation and decay. Decreased Dand5 expression lifts repression of Nodal and defines leftness by induction of the lateral plate mesoderm Nodal signaling cascade. This chain is Endoribonuclease Dicer-L (dicer1.L), found in Xenopus laevis (African clawed frog).